A 407-amino-acid chain; its full sequence is MATIFFADPELVIGHGRRVLFVNPDDLQLFKEIELPPDLATCGLKVADSKEQHCQHEQQDVAAAGSAKQSSNTASASASKAKAIEVSIQNVSYSPDRQLLAITTTGGQKALLLYRSRMEHARLLSVRPLARASSALRFCSDGSSVLVTDKTGDCYQYDCVEVEAAPRLLLGHLSVVFDILWTDDQQHIITCDRDDKIRVTNYPATFDIHSYCLGHKEFVSGLALLTEQHIVSSSGDKTLRVWNFIEGKELLIHQLPAPAVRLQVQQLEPEKVYQVAVLFYDHVDGVAIYRLERSSGDNWAITATTVVRADAGLWNICNFTLTGNRVYVTGAENECLAIKAYDIGSGETSTSVPDGWVKMVLRGLEAEGVAYLPEDLSVWFKKRFDNVSDYLERKKRRIEEQQQQKCG.

WD repeat units follow at residues 83 to 124, 171 to 210, and 214 to 252; these read AIEV…ARLL, GHLS…DIHS, and GHKE…ELLI.

The protein belongs to the WD repeat TRM82 family. As to quaternary structure, forms a heterodimer with the catalytic subunit Mettl1. Interacts with mei-P26 and weakly interacts with bgcn; required for the function or formation of the mei-P26-bgcn-bam-sxl complex. Interacts with nanos; may be involved in mei-P26-dependent derepression of the BMP signaling pathway. Interacts with Myc; the interaction may be mediated by mei-P26 and may be involved in the regulation of ribosome biogenesis. In testis, it is present at high level in hub cells, a niche for germline stem cells of testis. Ubiquitously expressed in all testicular cells throughout spermatogenesis. Ubiquitously expressed in all germline and somatic cells of the ovary.

The protein resides in the nucleus. Its subcellular location is the cytoplasm. It functions in the pathway tRNA modification; N(7)-methylguanine-tRNA biosynthesis. In terms of biological role, required for the Mettl1-dependent formation of N(7)-methylguanine at position 46 (m7G46) in tRNA. In the Mettl1-wuho methyltransferase complex, it is required to stabilize and induce conformational changes of the catalytic subunit. Required for binding of nanos mRNA and repression of translation by the mei-P26-bgcn-bam-sxl complex. May cooperate with mei-P26 and nanos to derepress the BMP signaling pathway. May cooperate with mei-P26 to suppress expression of a subset of microRNAs. May cooperate with mei-P26 to regulate bam expression levels in germline cells during gametogenesis. Required to promote mitosis to meiosis transition during gametogenesis. May regulate germline cell division in part by regulating ribosome biogenesis. The polypeptide is tRNA (guanine-N(7)-)-methyltransferase non-catalytic subunit wuho (Drosophila ananassae (Fruit fly)).